The following is a 191-amino-acid chain: dCTP deaminase, dUMP-forming (191 aa).

DCTP contacts are provided by residues 101–106 (KSSLGR), Asp119, 127–129 (TLE), Gln148, Tyr162, and Gln174. Glu129 functions as the Proton donor/acceptor in the catalytic mechanism.

Belongs to the dCTP deaminase family. In terms of assembly, homotrimer.

It carries out the reaction dCTP + 2 H2O = dUMP + NH4(+) + diphosphate. It functions in the pathway pyrimidine metabolism; dUMP biosynthesis; dUMP from dCTP: step 1/1. Functionally, bifunctional enzyme that catalyzes both the deamination of dCTP to dUTP and the hydrolysis of dUTP to dUMP without releasing the toxic dUTP intermediate. The sequence is that of dCTP deaminase, dUMP-forming from Streptomyces coelicolor (strain ATCC BAA-471 / A3(2) / M145).